Reading from the N-terminus, the 790-residue chain is Pentatricopeptide repeat-containing protein OTP51, chloroplastic (790 aa).

A chloroplast-targeting transit peptide spans 1-56 (MATTSPCAAPSPSLRCPLALSHPFASPPPPPALRLAGPKLLPGRLAVSPPPGIPAV). PPR repeat units lie at residues 182–216 (NFAL…GRVP), 217–254 (AEST…GGYK), 256–296 (RLSL…NLDV), 299–333 (DVYA…GFDE), 334–368 (GIDV…GSDL), 369–403 (PVQA…NIPP), 404–438 (NVAS…DMKH), 439–469 (LMPA…CIAR), 473–507 (NRIL…GMIG), and 509–543 (NTKS…KYDV). A disordered region spans residues 762–790 (GSSIGSDGTQDTDTDSDDDMQMSDTERDE). Residues 771–790 (QDTDTDSDDDMQMSDTERDE) show a composition bias toward acidic residues.

This sequence belongs to the PPR family. P subfamily.

It localises to the plastid. The protein localises to the chloroplast. Its function is as follows. Promotes the splicing of group II introns in chloroplasts. Required for the splicing of intron 2 of plastid ycf3 transcripts, a factor required for the assembly of photosystem I (PSI). Involved in the splicing of atpF, ndhA, petB and rps16 chloroplastic transcripts. Required for the assembly of PSI. This is Pentatricopeptide repeat-containing protein OTP51, chloroplastic from Oryza sativa subsp. japonica (Rice).